Here is a 401-residue protein sequence, read N- to C-terminus: DNA replication and repair protein RecF (401 aa).

30–37 contacts ATP; it reads GYNGIGKT.

This sequence belongs to the RecF family.

Its subcellular location is the cytoplasm. In terms of biological role, the RecF protein is involved in DNA metabolism; it is required for DNA replication and normal SOS inducibility. RecF binds preferentially to single-stranded, linear DNA. It also seems to bind ATP. This Arthrobacter sp. (strain FB24) protein is DNA replication and repair protein RecF.